The sequence spans 60 residues: Large ribosomal subunit protein bL32 (60 aa).

The disordered stretch occupies residues 1 to 60 (MAVQQNKKSPSKRGMHRSHNALTVPGIAVEPTTGETHMRHHISPNGFYRGRQVLKNKSEA). Residues 9–19 (SPSKRGMHRSH) show a composition bias toward basic residues.

Belongs to the bacterial ribosomal protein bL32 family.

This chain is Large ribosomal subunit protein bL32, found in Acidovorax ebreus (strain TPSY) (Diaphorobacter sp. (strain TPSY)).